Here is a 330-residue protein sequence, read N- to C-terminus: tRNA U34 carboxymethyltransferase (330 aa).

Carboxy-S-adenosyl-L-methionine is bound by residues K91, W105, K110, G130, 152 to 154 (DPS), 181 to 182 (IE), M196, Y200, and R315.

This sequence belongs to the class I-like SAM-binding methyltransferase superfamily. CmoB family. In terms of assembly, homotetramer.

The catalysed reaction is carboxy-S-adenosyl-L-methionine + 5-hydroxyuridine(34) in tRNA = 5-carboxymethoxyuridine(34) in tRNA + S-adenosyl-L-homocysteine + H(+). In terms of biological role, catalyzes carboxymethyl transfer from carboxy-S-adenosyl-L-methionine (Cx-SAM) to 5-hydroxyuridine (ho5U) to form 5-carboxymethoxyuridine (cmo5U) at position 34 in tRNAs. This Shewanella loihica (strain ATCC BAA-1088 / PV-4) protein is tRNA U34 carboxymethyltransferase.